A 234-amino-acid chain; its full sequence is Sugar fermentation stimulation protein homolog (234 aa).

This sequence belongs to the SfsA family.

This is Sugar fermentation stimulation protein homolog from Photobacterium profundum (strain SS9).